The following is a 211-amino-acid chain: Large ribosomal subunit protein mL48 (211 aa).

Residues 1–27 (MSGTLGKVLGVWTNTVSKQGFSLLRFR) constitute a mitochondrion transit peptide. K198 carries the N6-succinyllysine modification.

It belongs to the mitochondrion-specific ribosomal protein mL48 family. Component of the mitochondrial ribosome large subunit (39S) which comprises a 16S rRNA and about 50 distinct proteins. Interacts with OXA1L.

The protein localises to the mitochondrion. This is Large ribosomal subunit protein mL48 (Mrpl48) from Mus musculus (Mouse).